The sequence spans 121 residues: UPF0344 protein BCG9842_B4136 (121 aa).

The next 4 membrane-spanning stretches (helical) occupy residues 6 to 26 (ITAWALGLILFFVAYSLYSAG), 38 to 58 (LMYIIIIVTGFMLYMSIVKTA), 65 to 85 (WYGLKMLTGILVIGGMEMVLV), and 92 to 112 (PTGAVWGLFIVALVAVFYLGL).

It belongs to the UPF0344 family.

The protein localises to the cell membrane. The polypeptide is UPF0344 protein BCG9842_B4136 (Bacillus cereus (strain G9842)).